The following is a 176-amino-acid chain: 4-hydroxylaminobenzoate lyase (176 aa).

It belongs to the PnbB family.

The enzyme catalyses 4-hydroxylaminobenzoate + H2O + H(+) = 3,4-dihydroxybenzoate + NH4(+). Its function is as follows. Lyase involved in the degradation of nitroaromatic compounds. Catalyzes the conversion of 4-hydroxylaminobenzoate to 3,4-dihydroxybenzoate (protocatechuate). Required for the catabolism of 4-nitrotoluene. The polypeptide is 4-hydroxylaminobenzoate lyase (Pseudomonas putida (Arthrobacter siderocapsulatus)).